Consider the following 3974-residue polypeptide: Hybrid PKS-NRPS synthetase 1 (3974 aa).

A Ketosynthase family 3 (KS3) domain is found at 5-442 (SQKIAIIGSA…GTNAHCLIES (438 aa)). Residues Cys179, His316, and His362 each act as for beta-ketoacyl synthase activity in the active site. Residues 561-883 (IFTGQGAQWA…TGILERGLDD (323 aa)) form a malonyl-CoA:ACP transacylase (MAT) domain region. Positions 954–1079 (HPLLGSRLSA…HDSELGIPES (126 aa)) are N-terminal hotdog fold. Residues 954–1251 (HPLLGSRLSA…QVESVKLVPV (298 aa)) are dehydratase (DH) domain. Residues 954-1257 (HPLLGSRLSA…LVPVITPDAS (304 aa)) form the PKS/mFAS DH domain. His986 functions as the Proton acceptor; for dehydratase activity in the catalytic mechanism. The segment at 1107-1257 (TTPISSAKIY…LVPVITPDAS (151 aa)) is C-terminal hotdog fold. Catalysis depends on Asp1165, which acts as the Proton donor; for dehydratase activity. The interval 1398 to 1529 (PWNTELRNAI…GYLLLVAKTG (132 aa)) is methyltransferase (MT) domain. The tract at residues 2108–2282 (TYFLAGMTDS…ASIMDTGVVT (175 aa)) is ketoreductase (KR) domain. The tract at residues 2492 to 2516 (AGRSASPGASCSDRSLSTRSDETRS) is disordered. The span at 2498 to 2509 (PGASCSDRSLST) shows a compositional bias: polar residues. A condensation (C) domain region spans residues 2560–2994 (APLSPGQAQL…LERLRTSSDQ (435 aa)). The adenylation (A) (KR) domain stretch occupies residues 3021–3423 (DAMAEKYFDQ…DGSLILLGRM (403 aa)). The Carrier domain maps to 3537–3613 (SADQLVEAEV…EMAEKMASVR (77 aa)). Residue Ser3573 is modified to O-(pantetheine 4'-phosphoryl)serine. The tract at residues 3657–3940 (VVLTGAADLL…KLEMGEWIAL (284 aa)) is reductase (RED) domain.

In the C-terminal section; belongs to the NRP synthetase family.

It participates in secondary metabolite biosynthesis. In terms of biological role, hybrid PKS-NRPS synthetase; part of the hps1-dma1 gene cluster that probably mediates the biosynthesis a derivative of cyclopiazonic acid (CPA). The hybrid polyketide synthase-nonribosomal peptide synthetase (PKS-NRPS) nps1 might incorporates acetyl-CoA, malonyl-CoA, and tryptophan (Trp) and utilizes a C-terminal redox-incompetent reductase domain to make and release the tryptophan tetramic acid, cyclo-acetoacetyl-L-tryptophan (c-AATrp), as the first intermediate in the pathway. In addition, the cluster also includes the tryptophan dimethylallyltransferase dma1, the FAD-dependent oxidoreductase toxD, the cytochrome P450 monooxygenase cyp3.1 and the methyltransferase DOTSEDRAFT_139328; the latter 2 being not present in all CPA-producing fungi but involved in additional modifications that occur in biosynthesis the of a range of CPA and CPA-like products. Further studies are required to clarify whether the CPA-like hps1-dma1 cluster is functional or a non-functional relic reflecting evolution of D.septosporum. In Dothistroma septosporum (strain NZE10 / CBS 128990) (Red band needle blight fungus), this protein is Hybrid PKS-NRPS synthetase 1.